The chain runs to 492 residues: MTAHVRPTDAKKLIKGATGNWEVVIGMEIHAQVSSNAKLFSGASTAFGGPPNDHVSLVDAAMPGMLPVINKECVAQAVRTGLGLRAQINLRSTFDRKNYFYPDLPQGYQISQYKSPIVGEGEVIVDLLDGESFVVGIERLHLEQDAGKSIHDLSPTLSFVDLNRSGVALMEIVSRPDLRSSEEARAYVTKLRSILRYLGTCDGDMEKGNLRADVNVSVRRPGEPLGTRCEIKNVNSIRFIGQAIEVEARRQIEILEDGGVIDQETRLFDPNKGETRSMRSKEEAHDYRYFPDPDLLPLVLHADFVEELKSHLPELPDEKKARFIADYGLSPYDASVLVAERDTADYFEQVAKGRDGKAAANFVINELFGRLNKDGKDVITSPVSPAQVAAIVDLIGEGVISSKIAKDLFEIVYTEGGDPRVLVEERGLKQVTDTGAIEKVVDEIIAANPDKVAQVQAKPTMLGWFVGQAMKASGGKANPQALNDILKRKLGI.

The protein belongs to the GatB/GatE family. GatB subfamily. As to quaternary structure, heterotrimer of A, B and C subunits.

It catalyses the reaction L-glutamyl-tRNA(Gln) + L-glutamine + ATP + H2O = L-glutaminyl-tRNA(Gln) + L-glutamate + ADP + phosphate + H(+). The catalysed reaction is L-aspartyl-tRNA(Asn) + L-glutamine + ATP + H2O = L-asparaginyl-tRNA(Asn) + L-glutamate + ADP + phosphate + 2 H(+). Functionally, allows the formation of correctly charged Asn-tRNA(Asn) or Gln-tRNA(Gln) through the transamidation of misacylated Asp-tRNA(Asn) or Glu-tRNA(Gln) in organisms which lack either or both of asparaginyl-tRNA or glutaminyl-tRNA synthetases. The reaction takes place in the presence of glutamine and ATP through an activated phospho-Asp-tRNA(Asn) or phospho-Glu-tRNA(Gln). The chain is Aspartyl/glutamyl-tRNA(Asn/Gln) amidotransferase subunit B from Azorhizobium caulinodans (strain ATCC 43989 / DSM 5975 / JCM 20966 / LMG 6465 / NBRC 14845 / NCIMB 13405 / ORS 571).